A 221-amino-acid chain; its full sequence is Toll/interleukin-1 receptor domain-containing adapter protein (221 aa).

A disordered region spans residues 1 to 82; sequence MASSTSLPAP…HASDSGSSRW (82 aa). A compositionally biased stretch (low complexity) spans 48 to 67; that stretch reads SQPTSQDSPLPPSLSSVTSP. The TIR domain occupies 84 to 213; it reads KDYDVCVCHS…GGFRQVKEAV (130 aa). 2 disulfide bridges follow: C89-C134 and C142-C174.

Homodimer. Also forms heterodimers with MYD88. May interact with PIK3AP1. Interacts with TLR4 and IRAK2 via their respective TIR domains. Interacts with BMX and TBK1. Interacts with EIF2AK2. Does not interact with IRAK1, nor TLR9. Interacts with TLR2. Interacts with RAGE/AGER. As to quaternary structure, (Microbial infection) In case of infection, interacts with B.melitensis protein TcpB (AC Q8YF53); TcpB abolishes the TLR4-TIRAP interaction and downstream signaling. Post-translationally, phosphorylated by IRAK1 and IRAK4. Also phosphorylated by BTK. Polyubiquitinated. Polyubiquitination follows phosphorylation by BTK and leads to TIRAP degradation. As to expression, highly expressed in liver, kidney, spleen, skeletal muscle and heart. Also detected in peripheral blood leukocytes, lung, placenta, small intestine, thymus, colon and brain.

The protein localises to the cytoplasm. It localises to the cell membrane. It is found in the membrane. Adapter involved in TLR2, TLR4 and RAGE signaling pathways in the innate immune response. Acts via IRAK2 and TRAF-6, leading to the activation of NF-kappa-B, MAPK1, MAPK3 and JNK, and resulting in cytokine secretion and the inflammatory response. Positively regulates the production of TNF-alpha (TNF) and interleukin-6 (IL6). The polypeptide is Toll/interleukin-1 receptor domain-containing adapter protein (TIRAP) (Homo sapiens (Human)).